The chain runs to 245 residues: DNA polymerase sliding clamp 1 (245 aa).

It belongs to the PCNA family. As to quaternary structure, homotrimer. The subunits circularize to form a toroid; DNA passes through its center. Replication factor C (RFC) is required to load the toroid on the DNA.

Its function is as follows. Sliding clamp subunit that acts as a moving platform for DNA processing. Responsible for tethering the catalytic subunit of DNA polymerase and other proteins to DNA during high-speed replication. This is DNA polymerase sliding clamp 1 from Sulfurisphaera ohwakuensis.